The chain runs to 340 residues: MSEKNAYAKSGVDVEAGYEVVERIKKHVARTERAGVMGVLGGFGGMFDLSKTGVKEPVLVSGTDGVGTKLMLAIKYDKHDTIGQDCVAMCVNDIIAAGAEPLYFLDYIATGKNNPVKLEEVVSGVAEGCVQAGVALIGGETAEMPGMYGEDDYDLAGFAVGVAEKSQIIDGSKVKEGDILLGLASSGIHSNGYSLVRRVFADYTGKELLPELEGKRLKDVLLEPTRIYVKAALPLIKEELVNGIGHITGGGFIENVPRMFADDLAAEIDEDKVPVLPIFKALEKYGDIKHEEMFEIFNMGVGLMLAVSPENVNRVKDLLDEPVYEIGRIIKKADDSVVIK.

It belongs to the AIR synthase family.

It localises to the cytoplasm. It catalyses the reaction 2-formamido-N(1)-(5-O-phospho-beta-D-ribosyl)acetamidine + ATP = 5-amino-1-(5-phospho-beta-D-ribosyl)imidazole + ADP + phosphate + H(+). It participates in purine metabolism; IMP biosynthesis via de novo pathway; 5-amino-1-(5-phospho-D-ribosyl)imidazole from N(2)-formyl-N(1)-(5-phospho-D-ribosyl)glycinamide: step 2/2. This is Phosphoribosylformylglycinamidine cyclo-ligase from Streptococcus pyogenes serotype M6 (strain ATCC BAA-946 / MGAS10394).